Reading from the N-terminus, the 360-residue chain is Peptide chain release factor 1 (360 aa).

Gln237 is subject to N5-methylglutamine.

This sequence belongs to the prokaryotic/mitochondrial release factor family. Post-translationally, methylated by PrmC. Methylation increases the termination efficiency of RF1.

The protein localises to the cytoplasm. Functionally, peptide chain release factor 1 directs the termination of translation in response to the peptide chain termination codons UAG and UAA. The chain is Peptide chain release factor 1 from Stutzerimonas stutzeri (strain A1501) (Pseudomonas stutzeri).